We begin with the raw amino-acid sequence, 142 residues long: Tol-Pal system protein TolR (142 aa).

Topologically, residues Met-1–Asn-17 are cytoplasmic. A helical membrane pass occupies residues Ile-18–Ile-38. Residues Ile-39–Ile-142 lie on the Periplasmic side of the membrane.

Belongs to the ExbD/TolR family. The Tol-Pal system is composed of five core proteins: the inner membrane proteins TolA, TolQ and TolR, the periplasmic protein TolB and the outer membrane protein Pal. They form a network linking the inner and outer membranes and the peptidoglycan layer.

It is found in the cell inner membrane. Functionally, part of the Tol-Pal system, which plays a role in outer membrane invagination during cell division and is important for maintaining outer membrane integrity. Required, with TolQ, for the proton motive force-dependent activation of TolA and for TolA-Pal interaction. The protein is Tol-Pal system protein TolR of Escherichia coli O157:H7.